The primary structure comprises 652 residues: MERPGPSDGSDASGPDPQLAVTMGFTGFGKKARTFDLEAMFEQTRRTAVERSRKTLEAREREEEMNREKELRRQNEDLEPTSSGSNVARACSKSSSRDTSSSESDESSDSSDDELIGPPLPLKMVEEPVNPMEEGVLGPLPPPLAEDVEEEDDDDGDSEEEENPVRKIPDSHEITIKHGTKTVSALGLDPSGARLVTGGYDYDVKFWDFAGMDASFKAFRSLQPCECHQIKSLQYSNTGDMILVVSGSSQAKVIDRDGFEVMECIKGDQYIVDMANTKGHTAMLHTGSWHPKIKGEFMTCSNDATVRTWEVENPKKQKSVFKPRTMQGKKVIPTTCTYSRDGSLIAAACQNGSIQIWDRNLTVHPKFHYKQAHDPGTDTSCVTFSYDGTVLASRGGDDTLKLWDIRQFNKPLFSASGLPTMFPMTDCCFSPDDKLIVTGTSVQRGCGSGKLVFFERRTFQRVYEIDITDASVVRCLWHPKLNQIMVGTGNGLAKVYYDPNKSQRGAKLCVVKTQRKAKQAETLTQDYIITPHALPMFREPRQRSTRKQLEKDRLDPLKSHKPEPPVAGPGRGGRVGTHGGTLSSYIVKNIALDKTDDSNPREAILRHAKAAEDNPYWVSPAYSKTQPKTMFAQVESDDEETKNEPEWKKRKI.

Disordered regions lie at residues 1–22 (MERP…LAVT) and 45–171 (RRTA…IPDS). A compositionally biased stretch (basic and acidic residues) spans 45–76 (RRTAVERSRKTLEAREREEEMNREKELRRQNE). Residues 92–102 (SKSSSRDTSSS) show a composition bias toward low complexity. Composition is skewed to acidic residues over residues 103–115 (ESDE…DDEL) and 146–162 (EDVE…EEEE). WD repeat units follow at residues 178-217 (HGTK…ASFK), 225-266 (CECH…ECIK), 279-319 (GHTA…KQKS), 328-367 (GKKV…HPKF), 374-413 (DPGT…KPLF), 419-464 (PTMF…RVYE), and 467-506 (ITDA…QRGA). A Glycyl lysine isopeptide (Lys-Gly) (interchain with G-Cter in SUMO2) cross-link involves residue Lys294. Lys450 bears the N6-acetyllysine mark. The segment covering 538-563 (REPRQRSTRKQLEKDRLDPLKSHKPE) has biased composition (basic and acidic residues). Residues 538–577 (REPRQRSTRKQLEKDRLDPLKSHKPEPPVAGPGRGGRVGT) form a disordered region. A Phosphothreonine modification is found at Thr577. Residues Lys588 and Lys594 each participate in a glycyl lysine isopeptide (Lys-Gly) (interchain with G-Cter in SUMO2) cross-link. A phosphoserine mark is found at Ser619 and Ser636. Residues 629-652 (TMFAQVESDDEETKNEPEWKKRKI) form a disordered region. Positions 642-652 (KNEPEWKKRKI) are enriched in basic and acidic residues.

The protein belongs to the WD repeat GAD-1 family.

This Bos taurus (Bovine) protein is WD repeat-containing protein 70 (WDR70).